The chain runs to 188 residues: Elongation factor P (188 aa).

The protein belongs to the elongation factor P family.

The protein resides in the cytoplasm. It participates in protein biosynthesis; polypeptide chain elongation. Its function is as follows. Involved in peptide bond synthesis. Stimulates efficient translation and peptide-bond synthesis on native or reconstituted 70S ribosomes in vitro. Probably functions indirectly by altering the affinity of the ribosome for aminoacyl-tRNA, thus increasing their reactivity as acceptors for peptidyl transferase. This Chlorobaculum parvum (strain DSM 263 / NCIMB 8327) (Chlorobium vibrioforme subsp. thiosulfatophilum) protein is Elongation factor P.